The chain runs to 417 residues: NADH-quinone oxidoreductase subunit D (417 aa).

This sequence belongs to the complex I 49 kDa subunit family. As to quaternary structure, NDH-1 is composed of 14 different subunits. Subunits NuoB, C, D, E, F, and G constitute the peripheral sector of the complex.

The protein localises to the cell inner membrane. It catalyses the reaction a quinone + NADH + 5 H(+)(in) = a quinol + NAD(+) + 4 H(+)(out). In terms of biological role, NDH-1 shuttles electrons from NADH, via FMN and iron-sulfur (Fe-S) centers, to quinones in the respiratory chain. The immediate electron acceptor for the enzyme in this species is believed to be ubiquinone. Couples the redox reaction to proton translocation (for every two electrons transferred, four hydrogen ions are translocated across the cytoplasmic membrane), and thus conserves the redox energy in a proton gradient. The polypeptide is NADH-quinone oxidoreductase subunit D (Herminiimonas arsenicoxydans).